Consider the following 285-residue polypeptide: Phosphoribosylaminoimidazole-succinocarboxamide synthase (285 aa).

This sequence belongs to the SAICAR synthetase family.

It catalyses the reaction 5-amino-1-(5-phospho-D-ribosyl)imidazole-4-carboxylate + L-aspartate + ATP = (2S)-2-[5-amino-1-(5-phospho-beta-D-ribosyl)imidazole-4-carboxamido]succinate + ADP + phosphate + 2 H(+). The protein operates within purine metabolism; IMP biosynthesis via de novo pathway; 5-amino-1-(5-phospho-D-ribosyl)imidazole-4-carboxamide from 5-amino-1-(5-phospho-D-ribosyl)imidazole-4-carboxylate: step 1/2. The chain is Phosphoribosylaminoimidazole-succinocarboxamide synthase from Leptospira interrogans serogroup Icterohaemorrhagiae serovar copenhageni (strain Fiocruz L1-130).